The following is a 244-amino-acid chain: MRRVAVIIPARFGAQRFPGKPLADLAGQPLIAHVVDRARRARGVDAVAVATDDARIAAAAEAAGAAAILTGPASTGTDRVAEAARKLMPSPDVVVNLQGDEPLIEPEAIETLVRAMEGGVEMATLARPLEPEELERTQVVKVVTDRHGDALYFSRAPIPHRRAGGVSALARAHVGIYAFTAAFLQEFAALPPGRLEAEESLEQLRALEHGHRIRVADTAYRGFGIDTPEDLDRARALLAAGPRE.

Belongs to the KdsB family.

Its subcellular location is the cytoplasm. The enzyme catalyses 3-deoxy-alpha-D-manno-oct-2-ulosonate + CTP = CMP-3-deoxy-beta-D-manno-octulosonate + diphosphate. It functions in the pathway nucleotide-sugar biosynthesis; CMP-3-deoxy-D-manno-octulosonate biosynthesis; CMP-3-deoxy-D-manno-octulosonate from 3-deoxy-D-manno-octulosonate and CTP: step 1/1. It participates in bacterial outer membrane biogenesis; lipopolysaccharide biosynthesis. In terms of biological role, activates KDO (a required 8-carbon sugar) for incorporation into bacterial lipopolysaccharide in Gram-negative bacteria. This is 3-deoxy-manno-octulosonate cytidylyltransferase from Anaeromyxobacter sp. (strain Fw109-5).